Consider the following 100-residue polypeptide: Urease subunit gamma (100 aa).

The protein belongs to the urease gamma subunit family. As to quaternary structure, heterotrimer of UreA (gamma), UreB (beta) and UreC (alpha) subunits. Three heterotrimers associate to form the active enzyme.

Its subcellular location is the cytoplasm. The catalysed reaction is urea + 2 H2O + H(+) = hydrogencarbonate + 2 NH4(+). Its pathway is nitrogen metabolism; urea degradation; CO(2) and NH(3) from urea (urease route): step 1/1. This Mesorhizobium japonicum (strain LMG 29417 / CECT 9101 / MAFF 303099) (Mesorhizobium loti (strain MAFF 303099)) protein is Urease subunit gamma.